Here is a 125-residue protein sequence, read N- to C-terminus: Aspercryptin biosynthesis cluster protein K (125 aa).

The disordered stretch occupies residues 104–125 (QRAESVAGDSRPREHRQGAVGY). Residues 113–125 (SRPREHRQGAVGY) are compositionally biased toward basic and acidic residues.

It functions in the pathway secondary metabolite biosynthesis. Its function is as follows. Part of the gene cluster that mediates the biosynthesis of aspercryptins, linear lipopeptides built from six amino acids including 2 highly unusual and nonproteogenic amino acids, 2-amino-octanoic acid (2aoa) and 2-amino-dodecanol (2adol). The core structure of aspercryptins is as follows: Ser/Ala-Thr-Ile/Val-2aoa-Asn-2adol. The first step of aspercryptin biosynthesis is the generation of the fatty acid precursors, octanoic and dodecanoic acids, by the FAS subunits atnF and atnM. The fatty acid precursors are likely transformed into the corresponding alpha-amino fatty acids in three steps. First, they are hydroxylated by the cytochrome P450 monooxygenase atnE, then oxidized to the corresponding alpha-keto acids by the NAD(P)-dependent oxidoreductase atnD, and finally converted to the alpha-amino fatty acids by the PLP-dependent aminotransferases atnH or atnJ. the alpha-amino fatty acids, 2-amino-octanoic and 2-amino-dodecanoic acids, are recognized, activated, and covalently tethered to the NRPS atnA by its fourth and sixth adenylation domains. The second module of atnA is the Thr module and contains an epimerase (E) domain responsible for the epimerization of Thr to D-allo-Thr. Additionally, despite atnA having only one epimerase domain, the first amino acid of aspercryptin A1 is D-Ser, suggesting that serine is either loaded directly as D-Ser on the first module or that the epimerase domain in the threonine module epimerizes both L-Ser and L-Thr. After condensation of the hexapeptide of aspercryptin, the C-terminal reductase (TE) domain might be involved in the reductive release and production of the aldehyde hexapeptide. Further reduction would generate aspercryptins. The variety of aspercryptins produced reflects the flexibility of the atnA NRPS, allowing incorporation of alanine instead of serine, valine for isoleucine, and a C10 fatty amino alcohol instead of the C12 version. AtnB seems to be involved in the selectivity for Ile versus Val by the third module. Moreover, type B, C and D aspercryptins have an additional N-terminal cichorine, acetyl and propionyl group respectively. In Emericella nidulans (strain FGSC A4 / ATCC 38163 / CBS 112.46 / NRRL 194 / M139) (Aspergillus nidulans), this protein is Aspercryptin biosynthesis cluster protein K.